Reading from the N-terminus, the 115-residue chain is Large ribosomal subunit protein P2 (115 aa).

The residue at position 1 (M1) is an N-acetylmethionine. Phosphoserine occurs at positions 17 and 19. Position 21 is an N6-acetyllysine; alternate (K21). K21 carries the N6-succinyllysine; alternate modification. The segment covering 76-90 has biased composition (low complexity); it reads APGSAAPAAGSAPAA. The segment at 76–115 is disordered; it reads APGSAAPAAGSAPAAAEEKKDEKKEESEESDDDMGFGLFD. Phosphoserine occurs at positions 79 and 86. Over residues 91–101 the composition is skewed to basic and acidic residues; the sequence is AEEKKDEKKEE. 2 positions are modified to phosphoserine: S102 and S105.

It belongs to the eukaryotic ribosomal protein P1/P2 family. As to quaternary structure, heterodimer with RPLP1 at the lateral ribosomal stalk of the large ribosomal subunit.

Functionally, plays an important role in the elongation step of protein synthesis. The polypeptide is Large ribosomal subunit protein P2 (Rplp2) (Mus musculus (Mouse)).